A 221-amino-acid chain; its full sequence is Octanoyltransferase (221 aa).

Residues 31–216 form the BPL/LPL catalytic domain; it reads GQIGDTLLLL…SLCAIFDLRP (186 aa). Substrate is bound by residues 76–83, 145–147, and 159–161; these read RGGEVTYH, AIG, and GLA. The active-site Acyl-thioester intermediate is cysteine 177.

This sequence belongs to the LipB family.

It localises to the cytoplasm. The enzyme catalyses octanoyl-[ACP] + L-lysyl-[protein] = N(6)-octanoyl-L-lysyl-[protein] + holo-[ACP] + H(+). It functions in the pathway protein modification; protein lipoylation via endogenous pathway; protein N(6)-(lipoyl)lysine from octanoyl-[acyl-carrier-protein]: step 1/2. Functionally, catalyzes the transfer of endogenously produced octanoic acid from octanoyl-acyl-carrier-protein onto the lipoyl domains of lipoate-dependent enzymes. Lipoyl-ACP can also act as a substrate although octanoyl-ACP is likely to be the physiological substrate. This Chloroflexus aggregans (strain MD-66 / DSM 9485) protein is Octanoyltransferase.